Consider the following 1182-residue polypeptide: Receptor-type guanylate cyclase gcy-19 (1182 aa).

The first 24 residues, 1 to 24, serve as a signal peptide directing secretion; sequence MEYLLFLLLFAGFLTFLPRFLIYA. Over 25 to 507 the chain is Extracellular; that stretch reads QITSSTTTTT…PQSFVDQYGA (483 aa). N91, N369, N430, and N453 each carry an N-linked (GlcNAc...) asparagine glycan. A helical membrane pass occupies residues 508–528; that stretch reads LVFAIGGVLIFAMLFVITCFF. The Cytoplasmic portion of the chain corresponds to 529–1182; that stretch reads YVMRQKRLER…FRRQETLALI (654 aa). A Protein kinase domain is found at 562-849; the sequence is RMSKRSLQSG…KGNLMDHVFN (288 aa). The Guanylate cyclase domain maps to 907–1037; it reads TVFFSDVVKF…DTVNTASRME (131 aa). The segment at 1094–1164 is disordered; the sequence is VSSNSGYQSD…EAKARDIHNE (71 aa). The span at 1142–1152 shows a compositional bias: low complexity; it reads SPTLSKRSVSP.

Belongs to the adenylyl cyclase class-4/guanylyl cyclase family. As to expression, expressed in IL2 sensory neurons.

It is found in the cell membrane. It carries out the reaction GTP = 3',5'-cyclic GMP + diphosphate. Its function is as follows. Guanylate cyclase involved in the production of the second messenger cGMP. The protein is Receptor-type guanylate cyclase gcy-19 of Caenorhabditis elegans.